Consider the following 168-residue polypeptide: 3-isopropylmalate dehydratase small subunit (168 aa).

The protein belongs to the LeuD family. LeuD type 2 subfamily. Heterodimer of LeuC and LeuD.

The catalysed reaction is (2R,3S)-3-isopropylmalate = (2S)-2-isopropylmalate. It functions in the pathway amino-acid biosynthesis; L-leucine biosynthesis; L-leucine from 3-methyl-2-oxobutanoate: step 2/4. Its function is as follows. Catalyzes the isomerization between 2-isopropylmalate and 3-isopropylmalate, via the formation of 2-isopropylmaleate. In Thermodesulfovibrio yellowstonii (strain ATCC 51303 / DSM 11347 / YP87), this protein is 3-isopropylmalate dehydratase small subunit.